The chain runs to 422 residues: Vitamin D3 receptor B (422 aa).

Positions 20–95 form a DNA-binding region, nuclear receptor; it reads PRICGVCGDK…IGMMKEFILT (76 aa). The Zn(2+) site is built by cysteine 23, cysteine 26, cysteine 40, cysteine 43, cysteine 59, cysteine 65, cysteine 75, and cysteine 78. 2 consecutive NR C4-type zinc fingers follow at residues 23-43 and 59-78; these read CGVCGDKATGFHFNAMTCEGC and CPFNGSCTITKDNRRHCQAC. Residues 96 to 125 are hinge; sequence DEEVQRKKELIQRRKDEEAHREAQKPRLSD. Positions 106–128 are disordered; that stretch reads IQRRKDEEAHREAQKPRLSDEQR. An NR LBD domain is found at 126–418; it reads EQRNIIDTLV…LTPLVLEVFG (293 aa). Tyrosine 142 contacts calcitriol. The interval 145–190 is disordered; sequence SYSDFSRFRPPVREGPVTRSASRAASLHSLSDASSDSFSHSPESGD. Low complexity predominate over residues 163–185; that stretch reads RSASRAASLHSLSDASSDSFSHS. Residue serine 234 coordinates calcitriol. The interval 243–261 is interaction with coactivator LXXLL motif; that stretch reads KMIPGFRELTAEDQIALLK. 4 residues coordinate calcitriol: arginine 271, serine 275, histidine 302, and histidine 392. The 9aaTAD motif lies at 411–419; the sequence is PLVLEVFGG.

It belongs to the nuclear hormone receptor family. Homodimer in the absence of bound vitamin D3. Heterodimer with RXRA after vitamin D3 binding. Interacts with ncoa1 and possibly other coactivators, leading to a strong increase of transcription of target genes. As to expression, detected in embryo 24 to 48 hours after fertilization, and in intestinal bulb.

It is found in the nucleus. It localises to the cytoplasm. Functionally, nuclear receptor for calcitriol, the active form of vitamin D3 which mediates the action of this vitamin on cells. Enters the nucleus upon vitamin D3 binding where it forms heterodimers with the retinoid X receptor/RXR. The VDR-RXR heterodimers bind to specific response elements on DNA and activate the transcription of vitamin D3-responsive target genes. Recruited to promoters via its interaction with BAZ1B/WSTF which mediates the interaction with acetylated histones, an essential step for VDR-promoter association. Plays a central role in calcium homeostasis. The protein is Vitamin D3 receptor B (vdrb) of Danio rerio (Zebrafish).